The following is a 140-amino-acid chain: Large ribosomal subunit protein bL17 (140 aa).

Belongs to the bacterial ribosomal protein bL17 family. As to quaternary structure, part of the 50S ribosomal subunit. Contacts protein L32.

The sequence is that of Large ribosomal subunit protein bL17 from Rhizobium rhizogenes (strain K84 / ATCC BAA-868) (Agrobacterium radiobacter).